The chain runs to 193 residues: Chromophore lyase CpcS/CpeS 4 (193 aa).

Belongs to the CpcS/CpeS biliprotein lyase family.

Covalently attaches a chromophore to Cys residue(s) of phycobiliproteins. The sequence is that of Chromophore lyase CpcS/CpeS 4 from Trichodesmium erythraeum (strain IMS101).